The primary structure comprises 389 residues: Phospho-N-acetylmuramoyl-pentapeptide-transferase (389 aa).

Transmembrane regions (helical) follow at residues R25–I45, T73–L93, F97–Y117, F135–A155, I190–A210, G222–M242, G258–W278, V286–I306, I311–V331, and Q366–L386.

This sequence belongs to the glycosyltransferase 4 family. MraY subfamily. Requires Mg(2+) as cofactor.

The protein localises to the cell inner membrane. The catalysed reaction is UDP-N-acetyl-alpha-D-muramoyl-L-alanyl-gamma-D-glutamyl-meso-2,6-diaminopimeloyl-D-alanyl-D-alanine + di-trans,octa-cis-undecaprenyl phosphate = di-trans,octa-cis-undecaprenyl diphospho-N-acetyl-alpha-D-muramoyl-L-alanyl-D-glutamyl-meso-2,6-diaminopimeloyl-D-alanyl-D-alanine + UMP. It participates in cell wall biogenesis; peptidoglycan biosynthesis. Functionally, catalyzes the initial step of the lipid cycle reactions in the biosynthesis of the cell wall peptidoglycan: transfers peptidoglycan precursor phospho-MurNAc-pentapeptide from UDP-MurNAc-pentapeptide onto the lipid carrier undecaprenyl phosphate, yielding undecaprenyl-pyrophosphoryl-MurNAc-pentapeptide, known as lipid I. In Burkholderia ambifaria (strain ATCC BAA-244 / DSM 16087 / CCUG 44356 / LMG 19182 / AMMD) (Burkholderia cepacia (strain AMMD)), this protein is Phospho-N-acetylmuramoyl-pentapeptide-transferase.